The following is a 296-amino-acid chain: Phosphoribosylaminoimidazole-succinocarboxamide synthase (296 aa).

The protein belongs to the SAICAR synthetase family.

It catalyses the reaction 5-amino-1-(5-phospho-D-ribosyl)imidazole-4-carboxylate + L-aspartate + ATP = (2S)-2-[5-amino-1-(5-phospho-beta-D-ribosyl)imidazole-4-carboxamido]succinate + ADP + phosphate + 2 H(+). It functions in the pathway purine metabolism; IMP biosynthesis via de novo pathway; 5-amino-1-(5-phospho-D-ribosyl)imidazole-4-carboxamide from 5-amino-1-(5-phospho-D-ribosyl)imidazole-4-carboxylate: step 1/2. The chain is Phosphoribosylaminoimidazole-succinocarboxamide synthase from Geobacter sp. (strain M21).